Here is a 369-residue protein sequence, read N- to C-terminus: GTPase Obg (369 aa).

The 158-residue stretch at 1–158 folds into the Obg domain; the sequence is MFTDVVELTV…RRIKLDLKLI (158 aa). The tract at residues 126–146 is disordered; the sequence is NTHFKSSTNQRPTYAQPGEKG. The segment covering 128 to 138 has biased composition (polar residues); sequence HFKSSTNQRPT. The OBG-type G domain maps to 159–362; it reads ADVGLVGFPN…LKHALFNLVQ (204 aa). GTP-binding positions include 165–172, 190–194, 212–215, 280–283, and 343–345; these read GFPNVGKS, FTTLT, DIPG, TRAD, and SSA. 2 residues coordinate Mg(2+): S172 and T192.

Belongs to the TRAFAC class OBG-HflX-like GTPase superfamily. OBG GTPase family. Monomer. The cofactor is Mg(2+).

The protein resides in the cytoplasm. An essential GTPase which binds GTP, GDP and possibly (p)ppGpp with moderate affinity, with high nucleotide exchange rates and a fairly low GTP hydrolysis rate. Plays a role in control of the cell cycle, stress response, ribosome biogenesis and in those bacteria that undergo differentiation, in morphogenesis control. In Sulfurimonas denitrificans (strain ATCC 33889 / DSM 1251) (Thiomicrospira denitrificans (strain ATCC 33889 / DSM 1251)), this protein is GTPase Obg.